The sequence spans 256 residues: Imidazole glycerol phosphate synthase subunit HisF (256 aa).

Catalysis depends on residues D12 and D131.

Belongs to the HisA/HisF family. In terms of assembly, heterodimer of HisH and HisF.

Its subcellular location is the cytoplasm. The catalysed reaction is 5-[(5-phospho-1-deoxy-D-ribulos-1-ylimino)methylamino]-1-(5-phospho-beta-D-ribosyl)imidazole-4-carboxamide + L-glutamine = D-erythro-1-(imidazol-4-yl)glycerol 3-phosphate + 5-amino-1-(5-phospho-beta-D-ribosyl)imidazole-4-carboxamide + L-glutamate + H(+). It participates in amino-acid biosynthesis; L-histidine biosynthesis; L-histidine from 5-phospho-alpha-D-ribose 1-diphosphate: step 5/9. In terms of biological role, IGPS catalyzes the conversion of PRFAR and glutamine to IGP, AICAR and glutamate. The HisF subunit catalyzes the cyclization activity that produces IGP and AICAR from PRFAR using the ammonia provided by the HisH subunit. This is Imidazole glycerol phosphate synthase subunit HisF from Pseudomonas putida (strain GB-1).